The primary structure comprises 582 residues: ATP-dependent lipid A-core flippase (582 aa).

A run of 5 helical transmembrane segments spans residues 26 to 46 (LIAA…LIYL), 68 to 88 (ILVM…SYCL), 140 to 160 (YVLV…AVMV), 164 to 184 (WQLS…ISIV), and 252 to 272 (GLVQ…ATFP). Residues 27–310 (IAASVALILN…LTSVNSQFQR (284 aa)) enclose the ABC transmembrane type-1 domain. The region spanning 342–578 (ITFDNVIFSY…GGAYKQLYSM (237 aa)) is the ABC transporter domain. 376–383 (GRSGSGKS) serves as a coordination point for ATP.

It belongs to the ABC transporter superfamily. Lipid exporter (TC 3.A.1.106) family. In terms of assembly, homodimer.

The protein resides in the cell inner membrane. The catalysed reaction is ATP + H2O + lipid A-core oligosaccharideSide 1 = ADP + phosphate + lipid A-core oligosaccharideSide 2.. In terms of biological role, involved in lipopolysaccharide (LPS) biosynthesis. Translocates lipid A-core from the inner to the outer leaflet of the inner membrane. Transmembrane domains (TMD) form a pore in the inner membrane and the ATP-binding domain (NBD) is responsible for energy generation. In Haemophilus ducreyi (strain 35000HP / ATCC 700724), this protein is ATP-dependent lipid A-core flippase.